The following is a 101-amino-acid chain: Small ribosomal subunit protein uS14 (101 aa).

It belongs to the universal ribosomal protein uS14 family. Part of the 30S ribosomal subunit. Contacts proteins S3 and S10.

In terms of biological role, binds 16S rRNA, required for the assembly of 30S particles and may also be responsible for determining the conformation of the 16S rRNA at the A site. The protein is Small ribosomal subunit protein uS14 of Pseudomonas putida (strain W619).